Here is a 220-residue protein sequence, read N- to C-terminus: MALVFRTVAQLAGVSLSLLGWVLSCLTNYLPHWKNLNLDLNEMENWTMGLWQTCVIQEEVGMQCKDFDSFLALPAELRVSRILMFLSNGLGFLGLLVSGFGLDCLRIGESQRDLKRRLLILGGILSWASGVTALVPVSWVAHKTVQEFWDENVPDFVPRWEFGEALFLGWFAGLSLLLGGCLLHCAACSSHAPLASGHYAVAQTQDHHQELETRNTNLKH.

The Cytoplasmic segment spans residues M1–Q10. Residues L11 to L30 traverse the membrane as a helical segment. Residues P31–R81 are Extracellular-facing. Residues I82 to L102 traverse the membrane as a helical segment. The Cytoplasmic portion of the chain corresponds to D103–R117. A helical membrane pass occupies residues L118–S138. Residues W139–E164 lie on the Extracellular side of the membrane. A helical transmembrane segment spans residues A165–C185. Residues A186–H220 lie on the Cytoplasmic side of the membrane.

The protein belongs to the claudin family.

It localises to the cell junction. The protein resides in the tight junction. Its subcellular location is the cell membrane. Its function is as follows. Plays a major role in tight junction-specific obliteration of the intercellular space, through calcium-independent cell-adhesion activity. This is Claudin-22 (CLDN22) from Homo sapiens (Human).